Here is a 268-residue protein sequence, read N- to C-terminus: Undecaprenyl-diphosphatase (268 aa).

A run of 7 helical transmembrane segments spans residues 42 to 62, 86 to 106, 108 to 128, 158 to 178, 184 to 204, 218 to 238, and 246 to 266; these read VPGK…ICVL, AIFV…DFIL, VLFT…AIVV, IALV…LLVG, AAEF…VVSL, LIAA…KWLV, and FTVF…YFSL.

This sequence belongs to the UppP family.

It is found in the cell inner membrane. It catalyses the reaction di-trans,octa-cis-undecaprenyl diphosphate + H2O = di-trans,octa-cis-undecaprenyl phosphate + phosphate + H(+). Catalyzes the dephosphorylation of undecaprenyl diphosphate (UPP). Confers resistance to bacitracin. This Parvibaculum lavamentivorans (strain DS-1 / DSM 13023 / NCIMB 13966) protein is Undecaprenyl-diphosphatase.